The sequence spans 800 residues: Nucleolar complex protein 3 homolog (800 aa).

The interval 37–90 is disordered; it reads STIKKYRKEQRKLRQAVKDAVSKKPFPLEDPKSKRPVKGMEREEEDEEDQALPL. Basic residues predominate over residues 40–51; sequence KKYRKEQRKLRQ. The segment covering 52–77 has biased composition (basic and acidic residues); sequence AVKDAVSKKPFPLEDPKSKRPVKGME. Positions 78–90 are enriched in acidic residues; that stretch reads REEEDEEDQALPL. Lys-333 is covalently cross-linked (Glycyl lysine isopeptide (Lys-Gly) (interchain with G-Cter in SUMO2)). Positions 450–489 form a coiled coil; sequence FKEKRKTLSRMQRKWKKAEEKLERELREAEASESTERKLK.

The protein belongs to the CBF/MAK21 family.

The protein localises to the nucleus. It is found in the nucleolus. The protein is Nucleolar complex protein 3 homolog (NOC3L) of Cricetulus griseus (Chinese hamster).